Consider the following 367-residue polypeptide: Peptide chain release factor 2 (367 aa).

An N5-methylglutamine modification is found at Gln254.

This sequence belongs to the prokaryotic/mitochondrial release factor family. Post-translationally, methylated by PrmC. Methylation increases the termination efficiency of RF2.

The protein resides in the cytoplasm. In terms of biological role, peptide chain release factor 2 directs the termination of translation in response to the peptide chain termination codons UGA and UAA. The polypeptide is Peptide chain release factor 2 (Neisseria meningitidis serogroup A / serotype 4A (strain DSM 15465 / Z2491)).